The primary structure comprises 134 residues: uncharacterized protein (134 aa).

The first 37 residues, 1–37, serve as a signal peptide directing secretion; the sequence is MSYIKRDHTALRDIAMKTFLKVVGLAASLSAASVAFS.

This is an uncharacterized protein from Coxiella burnetii (strain RSA 493 / Nine Mile phase I).